The primary structure comprises 81 residues: Small cysteine-rich protein 1 2 (81 aa).

An N-terminal signal peptide occupies residues 1–19 (MGVNFNICLLLLLVATISS). Residues 20–39 (QPLKATEKDDSTDENPFGIY) constitute a propeptide that is removed on maturation.

It belongs to the Cnidaria small cysteine-rich protein (SCRiP) family. alpha subfamily. Post-translationally, the basic myotoxic domain of rattlesnake crotamine toxins (with 6 Cys residues) has been detected in this protein. However, this protein contains 2 additional Cys at the C-terminal region. Hence, this protein may contain 4 disulfide bonds instead of the 3 suggested by the myotoxin domain.

It localises to the secreted. It is found in the nematocyst. Its function is as follows. Induces neurotoxic symptoms on zebrafish. Has also been claimed to be implied in calcification, but tests on homolog proteins suggest that proteins of this family have a neurotoxic function and not a calcification function. This is Small cysteine-rich protein 1 2 from Montipora capitata (Rice coral).